A 1783-amino-acid polypeptide reads, in one-letter code: Trans-splicing factor Raa3, chloroplastic (1783 aa).

The transit peptide at 1-40 (MKADLATAKGSSPAFSAPRTYRARLLSRCLNKCFNTVLVS) directs the protein to the chloroplast. 8 disordered regions span residues 97 to 378 (ATTH…VGVN), 420 to 484 (ATSA…VAAQ), 563 to 610 (ARVG…SATK), 652 to 709 (STEP…SPAA), 918 to 971 (AAPT…QRAS), 1395 to 1427 (RDAK…QQHQ), 1476 to 1506 (PAPA…RRSR), and 1620 to 1639 (VKGR…DVQG). The segment covering 105–118 (DSGGQGPAAAGGRG) has biased composition (gly residues). Low complexity-rich tracts occupy residues 126–157 (QAAA…PQRP), 186–205 (AVDA…PAPA), and 224–242 (AGKP…VGPQ). Over residues 256-273 (DESHMGLTHRDQGHDERI) the composition is skewed to basic and acidic residues. The span at 277–289 (AGEAWKAGAVAAP) shows a compositional bias: low complexity. A compositionally biased stretch (polar residues) spans 307 to 316 (LASSALGTHS). Low complexity-rich tracts occupy residues 343–374 (SGSS…ITSN), 420–436 (ATSA…SSSS), 577–599 (RPVQ…SQPG), 655–669 (PLAA…ASAS), 676–709 (SSSN…SPAA), 928–970 (SAAA…PQRA), and 1403–1417 (QSAA…AAQD). 2 stretches are compositionally biased toward basic residues: residues 1494–1506 (KSRR…RRSR) and 1620–1630 (VKGRGRGRRTA). The region spanning 1713 to 1772 (LAVGAAAGGAVIRNSRWLLSGAGALRRRLLTHAGWLVVPVRERQWKDLRSAEQQRRVVRE) is the RAP domain.

As to quaternary structure, part of a 1700 kDa complex that includes the precursor RNA to exon 1 and the tscA RNA.

Its subcellular location is the plastid. The protein localises to the chloroplast stroma. In terms of biological role, required for trans-splicing of exons 1 and 2 of the chloroplast encoded psaA mRNA (a group II intron). May be required for stability of the chloroplast RNA-protein complex in which it is found. This chain is Trans-splicing factor Raa3, chloroplastic (RAA3), found in Chlamydomonas reinhardtii (Chlamydomonas smithii).